Reading from the N-terminus, the 518-residue chain is Fusicoccin H C-9 hydroxylase (518 aa).

Residues 12-29 form a helical membrane-spanning segment; sequence HLLLISTVIAVLAALIVS. Residues Asn81 and Asn168 are each glycosylated (N-linked (GlcNAc...) asparagine). Cys456 contributes to the heme binding site.

This sequence belongs to the cytochrome P450 family. It depends on heme as a cofactor.

The protein localises to the membrane. Its pathway is mycotoxin biosynthesis. Functionally, cytochrome P450 monooxygenase; part of the 2 gene clusters that mediate the biosynthesis of fusicoccins, diterpene glucosides that display phytohormone-like activity and function as potent activators of plasma membrane H(+)-ATPases in plants by modifying 14-3-3 proteins and cause the plant disease constriction canker. The first step in the pathway is performed by the fusicoccadiene synthase PaFS that possesses both prenyl transferase and terpene cyclase activity, converting isopentenyl diphosphate and dimethylallyl diphosphate into geranylgeranyl diphosphate (GGDP) and successively converting GGDP into fusicocca-2,10(14)-diene, a precursor for fusicoccin H. The second step is the oxidation at the C-8 position by the cytochrome P450 monooxygenase PaP450-2 to yield fusicocca-2,10(14)-diene-8-beta-ol. The cytochrome P450 monooxygenase PaP450-1 then catalyzes the hydroxylation at the C-16 position to produce fusicocca-2,10(14)-diene-8-beta,16-diol. The dioxygenase fc-dox then catalyzes the 16-oxydation of fusicocca-2,10(14)-diene-8-beta,16-diol to yield an aldehyde (8-beta-hydroxyfusicocca-1,10(14)-dien-16-al). The short-chain dehydrogenase/reductase fc-sdr catalyzes the reduction of the aldehyde to yield fusicocca-1,10(14)-diene-8-beta,16-diol. The next step is the hydroxylation at C-9 performed by the cytochrome P450 monooxygenase PaP450-3 that leads to fusicoccin H aglycon which is glycosylated to fusicoccin H by the O-glycosyltransferase PaGT. Hydroxylation at C-12 by the cytochrome P450 monooxygenase PaP450-4 leads then to the production of fusicoccin Q and is followed by methylation by the O-methyltransferase PaMT to yield fusicoccin P. Fusicoccin P is further converted to fusicoccin J via prenylation by the O-glucose prenyltransferase PaPT. Cytochrome P450 monooxygenase PaP450-5 then performs hydroxylation at C-19 to yield dideacetyl-fusicoccin A which is acetylated to 3'-O-deacetyl-fusicoccin A by the O-acetyltransferase PaAT-2. Finally, a another acetylation by the O-acetyltransferase PaAT-1 yields fusicoccin A. The protein is Fusicoccin H C-9 hydroxylase of Phomopsis amygdali (Fusicoccum amygdali).